A 178-amino-acid chain; its full sequence is Large ribosomal subunit protein uL6 (178 aa).

It belongs to the universal ribosomal protein uL6 family. Part of the 50S ribosomal subunit.

Functionally, this protein binds to the 23S rRNA, and is important in its secondary structure. It is located near the subunit interface in the base of the L7/L12 stalk, and near the tRNA binding site of the peptidyltransferase center. The chain is Large ribosomal subunit protein uL6 from Francisella philomiragia subsp. philomiragia (strain ATCC 25017 / CCUG 19701 / FSC 153 / O#319-036).